Reading from the N-terminus, the 89-residue chain is Cell division topological specificity factor (89 aa).

It belongs to the MinE family.

Prevents the cell division inhibition by proteins MinC and MinD at internal division sites while permitting inhibition at polar sites. This ensures cell division at the proper site by restricting the formation of a division septum at the midpoint of the long axis of the cell. This is Cell division topological specificity factor from Edwardsiella ictaluri (strain 93-146).